The primary structure comprises 446 residues: 3',5'-cyclic-AMP phosphodiesterase 7B (446 aa).

In terms of domain architecture, PDEase spans 97 to 420 (LDEDYLGQAR…AQWKSLLSNQ (324 aa)). The active-site Proton donor is the histidine 173. 4 residues coordinate a divalent metal cation: histidine 177, histidine 213, aspartate 214, and aspartate 323. The disordered stretch occupies residues 422 to 446 (RRRGSGQDLAGPAPETLEQTEGATP). A Phosphoserine modification is found at serine 426. A Phosphothreonine modification is found at threonine 445.

It belongs to the cyclic nucleotide phosphodiesterase family. PDE7 subfamily. The cofactor is a divalent metal cation. Highly expressed in brain.

It catalyses the reaction 3',5'-cyclic AMP + H2O = AMP + H(+). It functions in the pathway purine metabolism; 3',5'-cyclic AMP degradation; AMP from 3',5'-cyclic AMP: step 1/1. With respect to regulation, inhibited by dipyridamole, IBMX and SCH 51866. Insensitive to zaprinast, rolipram, and milrinone. Functionally, hydrolyzes the second messenger cAMP, which is a key regulator of many important physiological processes. May be involved in the control of cAMP-mediated neural activity and cAMP metabolism in the brain. This is 3',5'-cyclic-AMP phosphodiesterase 7B from Mus musculus (Mouse).